The following is a 388-amino-acid chain: Nesprin-4 (388 aa).

Over 1-339 the chain is Cytoplasmic; that stretch reads MALVPPLGRE…GVPAPASKRP (339 aa). A disordered region spans residues 60–92; that stretch reads ELKSTESATSPSRLPLASSHEHQDGGKPCEHSD. Over residues 78 to 92 the composition is skewed to basic and acidic residues; it reads SHEHQDGGKPCEHSD. In terms of domain architecture, KASH spans 331–388; it reads VPAPASKRPLTLFFLLLFLLLVGATLLLPLSGVSCCSHARLARTPYLVLSYVNGLPPI. Residues 340-360 traverse the membrane as a helical; Anchor for type IV membrane protein segment; the sequence is LTLFFLLLFLLLVGATLLLPL. Residues 361 to 388 are Perinuclear space-facing; the sequence is SGVSCCSHARLARTPYLVLSYVNGLPPI.

It belongs to the nesprin family. In terms of assembly, core component of LINC complexes which are composed of inner nuclear membrane SUN domain-containing proteins coupled to outer nuclear membrane KASH domain-containing nesprins. SUN and KASH domain-containing proteins seem to bind each other promiscuously; however, differentially expression of LINC complex constituents can give rise to specific assemblies. Probably part of a SUN1-containing LINC complex. Interacts with kinesins KIF5B and KLC1. Post-translationally, the disulfid bond with SUN1 or SUN2 is required for stability of the respective LINC complex under tensile forces. In terms of tissue distribution, expressed in secretory epithelial cells, such as those found in exocrine pancreas, bulbourethral gland, mammary gland and salivary gland (at protein level). Also expressed in the cochlea, where it is restricted primarily to the 3 rows of outer hair cells and 1 row of inner hair cells (at protein level). Not detected in other cells of the cochlea, including Deiter's cells and pillar cells, nor in liver and kidney (at protein level).

It is found in the nucleus outer membrane. In terms of biological role, as a component of the LINC (LInker of Nucleoskeleton and Cytoskeleton) complex, involved in the connection between the nuclear lamina and the cytoskeleton. The nucleocytoplasmic interactions established by the LINC complex play an important role in the transmission of mechanical forces across the nuclear envelope and in nuclear movement and positioning. Behaves as a kinesin cargo, providing a functional binding site for kinesin-1 at the nuclear envelope. Hence may contribute to the establishment of secretory epithelial morphology, by promoting kinesin-dependent apical migration of the centrosome and Golgi apparatus and basal localization of the nucleus. In Mus musculus (Mouse), this protein is Nesprin-4 (Syne4).